The following is a 428-amino-acid chain: MVRFESTDSLMLARQLPNKTVALILAGGRGSRLKDLTATRAKPAVHFGGKFRIIDFALSNCLNSGVRRIGVITQYQSHTLVQHIQRGWSFLNEEMNEFVDLLPAQQRLSTEQWYKGTADAVCQNLDIIRRYDAEYIVILAGDHIYKMDYSRMLLDHVEKGAECTVACIPVPISEGSEFGIMEVTADYQITAFYEKPANPPPIPGDPSNALASMGIYIFNADYLFKLLEEDNNTPGSSHDFGKDIIPQLTARKVVWAHPFDLSCVTSNAELPPYWRDVGTLDAYWRANLDLASVTPELDMYDRAWPIRTHMEPLPPAKFVQDRSGSHGMTMNSLVSGGCIVSGSVVVHSVLFPRVRVNSFCTIDSSLLLPDVHVGRSCRLRRCIIDRACHIPEGMVIGENANEDSARFYRSEGGVVLVTRDMLAKLEAK.

Alpha-D-glucose 1-phosphate-binding positions include Tyr114, Gly179, 194-195 (EK), and Ser212.

This sequence belongs to the bacterial/plant glucose-1-phosphate adenylyltransferase family. In terms of assembly, homotetramer.

The catalysed reaction is alpha-D-glucose 1-phosphate + ATP + H(+) = ADP-alpha-D-glucose + diphosphate. The protein operates within glycan biosynthesis; glycogen biosynthesis. Involved in the biosynthesis of ADP-glucose, a building block required for the elongation reactions to produce glycogen. Catalyzes the reaction between ATP and alpha-D-glucose 1-phosphate (G1P) to produce pyrophosphate and ADP-Glc. This chain is Glucose-1-phosphate adenylyltransferase, found in Yersinia pseudotuberculosis serotype IB (strain PB1/+).